The chain runs to 140 residues: Large ribosomal subunit protein uL11 (140 aa).

Belongs to the universal ribosomal protein uL11 family. Part of the ribosomal stalk of the 50S ribosomal subunit. Interacts with L10 and the large rRNA to form the base of the stalk. L10 forms an elongated spine to which L12 dimers bind in a sequential fashion forming a multimeric L10(L12)X complex. In terms of processing, one or more lysine residues are methylated.

Its function is as follows. Forms part of the ribosomal stalk which helps the ribosome interact with GTP-bound translation factors. This chain is Large ribosomal subunit protein uL11, found in Nitratidesulfovibrio vulgaris (strain ATCC 29579 / DSM 644 / CCUG 34227 / NCIMB 8303 / VKM B-1760 / Hildenborough) (Desulfovibrio vulgaris).